A 311-amino-acid chain; its full sequence is Ribosomal RNA small subunit methyltransferase H (311 aa).

S-adenosyl-L-methionine-binding positions include 39 to 41 (GGH), Asp59, Phe81, Asp102, and His109.

The protein belongs to the methyltransferase superfamily. RsmH family.

The protein localises to the cytoplasm. The catalysed reaction is cytidine(1402) in 16S rRNA + S-adenosyl-L-methionine = N(4)-methylcytidine(1402) in 16S rRNA + S-adenosyl-L-homocysteine + H(+). Functionally, specifically methylates the N4 position of cytidine in position 1402 (C1402) of 16S rRNA. The chain is Ribosomal RNA small subunit methyltransferase H from Porphyromonas gingivalis (strain ATCC BAA-308 / W83).